The following is a 794-amino-acid chain: Inactive zinc metalloprotease C354.09c (794 aa).

The tract at residues 1–56 (MTDEKHVYVPPPKDPPSYEEVALHSALNNSAPPNDGEQNETSMEEMEIIEPPSEDS) is disordered. Residues 91-111 (IPFQFLYLAVIATVIILASYY) form a helical membrane-spanning segment.

The protein belongs to the peptidase M28 family. M28B subfamily.

It localises to the membrane. The protein is Inactive zinc metalloprotease C354.09c of Schizosaccharomyces pombe (strain 972 / ATCC 24843) (Fission yeast).